Reading from the N-terminus, the 175-residue chain is Protein LHCP TRANSLOCATION DEFECT (175 aa).

The N-terminal 68 residues, 1 to 68 (MASSSISFSC…WFKFGKNGVD (68 aa)), are a transit peptide targeting the chloroplast. The stretch at 117 to 149 (PVDILLMLAATEGDRPKIEELLKAGADYSVKDA) is one ANK repeat.

Interacts with CAO/cpSRP43, but is not a component of the transit complex. Interacts with LHCP (via T14 domain), TIC40 and TIC110. Highly expressed in leaves and seedlings. Detected in roots, but not in germinating seeds.

Its subcellular location is the plastid. It localises to the chloroplast thylakoid membrane. The protein resides in the chloroplast envelope. It is found in the chloroplast stroma. Its function is as follows. Involved in the import of light-harvesting complex proteins (LHCP) and subsequent routing of these proteins to the chloroplast signal recognition particle (SRP) pathway. The polypeptide is Protein LHCP TRANSLOCATION DEFECT (LTD) (Arabidopsis thaliana (Mouse-ear cress)).